Consider the following 169-residue polypeptide: Small ribosomal subunit protein uS5 (169 aa).

The S5 DRBM domain occupies 14–77 (LDDQVVAINR…AAAEKNLITV (64 aa)).

The protein belongs to the universal ribosomal protein uS5 family. In terms of assembly, part of the 30S ribosomal subunit. Contacts proteins S4 and S8.

Its function is as follows. With S4 and S12 plays an important role in translational accuracy. Functionally, located at the back of the 30S subunit body where it stabilizes the conformation of the head with respect to the body. The protein is Small ribosomal subunit protein uS5 of Limosilactobacillus reuteri (strain DSM 20016) (Lactobacillus reuteri).